The primary structure comprises 101 residues: Putative membrane protein insertion efficiency factor (101 aa).

This sequence belongs to the UPF0161 family.

It localises to the cell membrane. Could be involved in insertion of integral membrane proteins into the membrane. This Lacticaseibacillus casei (strain BL23) (Lactobacillus casei) protein is Putative membrane protein insertion efficiency factor.